The sequence spans 499 residues: Guanosine-5'-triphosphate,3'-diphosphate pyrophosphatase (499 aa).

Belongs to the GppA/Ppx family. GppA subfamily.

It catalyses the reaction guanosine 3'-diphosphate 5'-triphosphate + H2O = guanosine 3',5'-bis(diphosphate) + phosphate + H(+). The protein operates within purine metabolism; ppGpp biosynthesis; ppGpp from GTP: step 2/2. Functionally, catalyzes the conversion of pppGpp to ppGpp. Guanosine pentaphosphate (pppGpp) is a cytoplasmic signaling molecule which together with ppGpp controls the 'stringent response', an adaptive process that allows bacteria to respond to amino acid starvation, resulting in the coordinated regulation of numerous cellular activities. The sequence is that of Guanosine-5'-triphosphate,3'-diphosphate pyrophosphatase from Klebsiella pneumoniae (strain 342).